A 353-amino-acid chain; its full sequence is UPF0283 membrane protein YcjF (353 aa).

3 consecutive transmembrane segments (helical) span residues 70–90, 100–120, and 213–233; these read MVMG…VQWT, VALG…GSVV, and ESTL…FIAW.

This sequence belongs to the UPF0283 family.

Its subcellular location is the cell inner membrane. The polypeptide is UPF0283 membrane protein YcjF (Escherichia coli O7:K1 (strain IAI39 / ExPEC)).